A 352-amino-acid polypeptide reads, in one-letter code: Macrophage-capping protein (352 aa).

An N-acetylmethionine modification is found at methionine 1. One copy of the Gelsolin-like 1 repeat lies at 27–75 (EKLKPVPIARESHGIFFSGDSYLVLHNGPEEASHLHLWIGQQSSRDEQG). The Nuclear localization signal signature appears at 139–148 (RKLYQVKGKK). 2 Gelsolin-like repeats span residues 150–190 (IRAT…LERN) and 265–311 (MNLT…KERQ). Serine 341 is modified (phosphoserine).

Belongs to the villin/gelsolin family. In terms of assembly, interacts with NUP62. Interacts with NUTF2 and RAN; involved in CAPG nuclear import. Phosphorylated. Nuclear GCAP39 is more highly phosphorylated than cytoplasmic GCAP39. As to expression, present in a large variety of tissues and is particularly abundant in kidney and lung. Highly expressed in macrophages (at protein level).

The protein resides in the nucleus. It is found in the cytoplasm. The protein localises to the melanosome. It localises to the cell projection. Its subcellular location is the lamellipodium. The protein resides in the ruffle. Its function is as follows. Calcium-sensitive protein which reversibly blocks the barbed ends of actin filaments but does not sever preformed actin filaments. May play an important role in macrophage function. May play a role in regulating cytoplasmic and/or nuclear structures through potential interactions with actin. May bind DNA. Uncapping occurs either when Ca(2+) falls or when the concentration of polyphosphoinositide rises, both at low and high Ca(2+). In Mus musculus (Mouse), this protein is Macrophage-capping protein (Capg).